Here is a 142-residue protein sequence, read N- to C-terminus: Hemoglobin subunit alpha-1 (142 aa).

Positions 2–142 (VLSPADKTNV…VSTVLTSKYR (141 aa)) constitute a Globin domain. Histidine 59 provides a ligand contact to O2. Histidine 88 serves as a coordination point for heme b.

This sequence belongs to the globin family. Heterotetramer of two alpha chains and two beta chains. Red blood cells.

Involved in oxygen transport from the lung to the various peripheral tissues. In terms of biological role, hemopressin acts as an antagonist peptide of the cannabinoid receptor CNR1. Hemopressin-binding efficiently blocks cannabinoid receptor CNR1 and subsequent signaling. This is Hemoglobin subunit alpha-1 (HBA1) from Hylobates lar (Lar gibbon).